A 669-amino-acid chain; its full sequence is UvrABC system protein B (669 aa).

The Helicase ATP-binding domain maps to 26 to 183; it reads TNFHAGIAKQ…RHLTELQYTR (158 aa). 39–46 provides a ligand contact to ATP; it reads GVTGSGKT. The Beta-hairpin motif lies at 92-115; that stretch reads YYDYYQPEAYVPASDTFIEKDSSI. The region spanning 431 to 597 is the Helicase C-terminal domain; the sequence is QVDDLISQIN…SVVRPISDIL (167 aa). Residues 631–666 form the UVR domain; it reads AAQMKMLEQQMYQHARDLEFEDAARIRDQIQRLREA.

This sequence belongs to the UvrB family. Forms a heterotetramer with UvrA during the search for lesions. Interacts with UvrC in an incision complex.

The protein resides in the cytoplasm. Functionally, the UvrABC repair system catalyzes the recognition and processing of DNA lesions. A damage recognition complex composed of 2 UvrA and 2 UvrB subunits scans DNA for abnormalities. Upon binding of the UvrA(2)B(2) complex to a putative damaged site, the DNA wraps around one UvrB monomer. DNA wrap is dependent on ATP binding by UvrB and probably causes local melting of the DNA helix, facilitating insertion of UvrB beta-hairpin between the DNA strands. Then UvrB probes one DNA strand for the presence of a lesion. If a lesion is found the UvrA subunits dissociate and the UvrB-DNA preincision complex is formed. This complex is subsequently bound by UvrC and the second UvrB is released. If no lesion is found, the DNA wraps around the other UvrB subunit that will check the other stand for damage. The protein is UvrABC system protein B of Xylella fastidiosa (strain M12).